A 1580-amino-acid polypeptide reads, in one-letter code: Transcriptional activator GLI3 (1580 aa).

Met-1 is modified (N-acetylmethionine). 2 stretches are compositionally biased toward polar residues: residues 1–10 (MEAQSHSSTT) and 58–78 (ITMQ…PSTS). The disordered stretch occupies residues 1 to 79 (MEAQSHSSTT…KVSEEPSTSS (79 aa)). Position 175 is an omega-N-methylarginine (Arg-175). Positions 368–475 (QSLGSAFGHS…DKDESKQEPE (108 aa)) are disordered. Over residues 401–427 (NPVQVSSGPSESSQNKPTSESAVSSTG) the composition is skewed to polar residues. Glycyl lysine isopeptide (Lys-Gly) (interchain with G-Cter in SUMO2) cross-links involve residues Lys-438 and Lys-462. A compositionally biased stretch (basic and acidic residues) spans 461-474 (VKEEGDKDESKQEP). C2H2-type zinc fingers lie at residues 480-505 (TNCH…NNDH), 513-540 (FVCR…MRRH), 546-570 (HKCT…LRSH), 576-601 (YVCE…NRTH), and 607-632 (YVCK…KTVH). Residues 620–728 (DPSSLRKHVK…PISNYSNSGL (109 aa)) form a disordered region. Over residues 632–648 (HGPEAHVTKKQRGDIHP) the composition is skewed to basic and acidic residues. Ser-664 carries the phosphoserine modification. The span at 684-699 (SKREECLQVKTVKAEK) shows a compositional bias: basic and acidic residues. Over residues 703-726 (SQPSPGGQSSCSSQQSPISNYSNS) the composition is skewed to low complexity. The mediates interaction with DZIP1 stretch occupies residues 745–845 (DETPIMDSTI…VDVTMLNMLN (101 aa)). A Glycyl lysine isopeptide (Lys-Gly) (interchain with G-Cter in ubiquitin) cross-link involves residue Lys-773. Residue Lys-779 forms a Glycyl lysine isopeptide (Lys-Gly) (interchain with G-Cter in SUMO2); alternate linkage. Lys-779 is covalently cross-linked (Glycyl lysine isopeptide (Lys-Gly) (interchain with G-Cter in ubiquitin); alternate). Residues Lys-784 and Lys-800 each participate in a glycyl lysine isopeptide (Lys-Gly) (interchain with G-Cter in ubiquitin) cross-link. Residues Ser-849, Ser-865, Ser-877, and Ser-907 each carry the phosphoserine; by PKA modification. Over residues 863-882 (RSSGISPCFSSRRSSEASQA) the composition is skewed to low complexity. A disordered region spans residues 863 to 918 (RSSGISPCFSSRRSSEASQAEGRPQNVSVADSYDPISTDASRRSSEASQSDGLPSL). The segment covering 908 to 918 (EASQSDGLPSL) has biased composition (polar residues). 2 positions are modified to phosphoserine; by PKA: Ser-980 and Ser-1006. Residues 981–1042 (DGGAHGYGRR…PAMATSAEKR (62 aa)) form a disordered region.

The protein belongs to the GLI C2H2-type zinc-finger protein family. In terms of assembly, the full-length GLI3 form (GLI3FL) interacts with SUFU and this interaction regulates the formation of either repressor or activator forms of GLI3. Its association with SUFU is regulated by Hh signaling and dissociation of the SUFU-GLI3 interaction requires the presence of the ciliary motor KIF3A. Interacts with KIF7. The activator form of GLI3 (GLI3A) but not the repressor form (GLI3R) can interact with TRPS1. The phosphorylated form interacts with BTRC. Interacts with ZIC1. Interacts with ZIC3 (via C2H2-type domains 3, 4 and 5); the interaction enhances its transcriptional activity. Interacts with WRD11; the interaction associates EMX1 with GLI3. Interacts with DZIP1; retains GLI3 within the cytoplasm. In terms of processing, phosphorylated on multiple sites by protein kinase A (PKA) and phosphorylation by PKA primes further phosphorylation by CK1 and GSK3. Phosphorylated by DYRK2 (in vitro). Phosphorylation is essential for its proteolytic processing. Post-translationally, transcriptional repressor GLI3R, a C-terminally truncated form, is generated from the full-length GLI3 protein (GLI3FL/GLI3-190) through proteolytic processing. This process requires PKA-primed phosphorylation of GLI3, ubiquitination of GLI3 and the presence of BTRC. GLI3FL is complexed with SUFU in the cytoplasm and is maintained in a neutral state. Without the Hh signal, the SUFU-GLI3 complex is recruited to cilia, leading to the efficient processing of GLI3FL into GLI3R. GLI3R formation leads to its dissociation from SUFU, allowing it to translocate into the nucleus, and repress Hh target genes. When Hh signaling is initiated, SUFU dissociates from GLI3FL and this has two consequences. First, GLI3R production is halted. Second, free GLI3FL translocates to the nucleus, where it is phosphorylated, destabilized, and converted to a transcriptional activator (GLI3A). Phosphorylated in vitro by ULK3. In terms of tissue distribution, is expressed in a wide variety of normal adult tissues, including lung, colon, spleen, placenta, testis, and myometrium.

The protein localises to the nucleus. It localises to the cytoplasm. Its subcellular location is the cell projection. The protein resides in the cilium. Functionally, has a dual function as a transcriptional activator and a repressor of the sonic hedgehog (Shh) pathway, and plays a role in limb development. The full-length GLI3 form (GLI3FL) after phosphorylation and nuclear translocation, acts as an activator (GLI3A) while GLI3R, its C-terminally truncated form, acts as a repressor. A proper balance between the GLI3 activator and the repressor GLI3R, rather than the repressor gradient itself or the activator/repressor ratio gradient, specifies limb digit number and identity. In concert with TRPS1, plays a role in regulating the size of the zone of distal chondrocytes, in restricting the zone of PTHLH expression in distal cells and in activating chondrocyte proliferation. Binds to the minimal GLI-consensus sequence 5'-GGGTGGTC-3'. The protein is Transcriptional activator GLI3 (GLI3) of Homo sapiens (Human).